The chain runs to 412 residues: [Pyruvate dehydrogenase (acetyl-transferring)] kinase isozyme 4, mitochondrial (412 aa).

The region spanning 138–368 (ILEYKDTCTV…DAIIYLKALS (231 aa)) is the Histidine kinase domain. ATP-binding positions include 254–261 (ELFKNAMR), D293, 312–313 (ST), and 329–334 (GFGYGL).

The protein belongs to the PDK/BCKDK protein kinase family. As to quaternary structure, homodimer. Interacts with the pyruvate dehydrogenase complex subunit DLAT, and is part of the multimeric pyruvate dehydrogenase complex that contains multiple copies of pyruvate dehydrogenase (E1), dihydrolipoamide acetyltransferase (DLAT, E2) and lipoamide dehydrogenase (DLD, E3).

It is found in the mitochondrion matrix. The enzyme catalyses L-seryl-[pyruvate dehydrogenase E1 alpha subunit] + ATP = O-phospho-L-seryl-[pyruvate dehydrogenase E1 alpha subunit] + ADP + H(+). In terms of biological role, kinase that plays a key role in regulation of glucose and fatty acid metabolism and homeostasis via phosphorylation of the pyruvate dehydrogenase subunits PDHA1 and PDHA2. This inhibits pyruvate dehydrogenase activity, and thereby regulates metabolite flux through the tricarboxylic acid cycle, down-regulates aerobic respiration and inhibits the formation of acetyl-coenzyme A from pyruvate. Inhibition of pyruvate dehydrogenase decreases glucose utilization and increases fat metabolism in response to prolonged fasting and starvation. Plays an important role in maintaining normal blood glucose levels under starvation, and is involved in the insulin signaling cascade. Via its regulation of pyruvate dehydrogenase activity, plays an important role in maintaining normal blood pH and in preventing the accumulation of ketone bodies under starvation. In the fed state, mediates cellular responses to glucose levels and to a high-fat diet. Regulates both fatty acid oxidation and de novo fatty acid biosynthesis. Plays a role in the generation of reactive oxygen species. Protects detached epithelial cells against anoikis. Plays a role in cell proliferation via its role in regulating carbohydrate and fatty acid metabolism. This is [Pyruvate dehydrogenase (acetyl-transferring)] kinase isozyme 4, mitochondrial (Pdk4) from Mus musculus (Mouse).